The chain runs to 276 residues: NADPH-dependent 7-cyano-7-deazaguanine reductase (276 aa).

83–85 (IES) provides a ligand contact to substrate. 85 to 86 (SK) provides a ligand contact to NADPH. C184 (thioimide intermediate) is an active-site residue. D191 acts as the Proton donor in catalysis. Residue 223-224 (HE) participates in substrate binding. NADPH is bound at residue 252–253 (RG).

Belongs to the GTP cyclohydrolase I family. QueF type 2 subfamily. As to quaternary structure, homodimer.

Its subcellular location is the cytoplasm. The enzyme catalyses 7-aminomethyl-7-carbaguanine + 2 NADP(+) = 7-cyano-7-deazaguanine + 2 NADPH + 3 H(+). It functions in the pathway tRNA modification; tRNA-queuosine biosynthesis. Its function is as follows. Catalyzes the NADPH-dependent reduction of 7-cyano-7-deazaguanine (preQ0) to 7-aminomethyl-7-deazaguanine (preQ1). This Pseudomonas fluorescens (strain ATCC BAA-477 / NRRL B-23932 / Pf-5) protein is NADPH-dependent 7-cyano-7-deazaguanine reductase.